We begin with the raw amino-acid sequence, 489 residues long: Putative (R)-citramalate synthase CimA (489 aa).

The 253-residue stretch at 3–255 folds into the Pyruvate carboxyltransferase domain; it reads VKILDTTLRD…KTKIKKERLY (253 aa).

It belongs to the alpha-IPM synthase/homocitrate synthase family. As to quaternary structure, homodimer.

The catalysed reaction is pyruvate + acetyl-CoA + H2O = (3R)-citramalate + CoA + H(+). It participates in amino-acid biosynthesis; L-isoleucine biosynthesis; 2-oxobutanoate from pyruvate: step 1/3. Its function is as follows. Catalyzes the condensation of pyruvate and acetyl-coenzyme A to form (R)-citramalate. The sequence is that of Putative (R)-citramalate synthase CimA (cimA) from Archaeoglobus fulgidus (strain ATCC 49558 / DSM 4304 / JCM 9628 / NBRC 100126 / VC-16).